A 970-amino-acid chain; its full sequence is Villin-3 (970 aa).

Gelsolin-like repeat units lie at residues 31-111, 151-219, 273-339, 416-484, 536-576, and 643-714; these read AVPV…ERFL, TVHV…EDGK, VLTR…TVIF, KFYS…PAEF, AIQV…QELA, and NFTQ…PQFF. The disordered stretch occupies residues 741-908; it reads DGVKPKLDKP…EGQPENEEGL (168 aa). The segment covering 755-778 has biased composition (polar residues); it reads TTSSSHTGRSSVPEKSQRSRSMSF. Over residues 833–842 the composition is skewed to low complexity; sequence AASIAAISAS. Positions 878 to 893 are enriched in polar residues; sequence KDSTPSKDSPTVTPTI. One can recognise an HP domain in the interval 905-970; the sequence is EEGLPVYPYE…NRLKIALQLF (66 aa).

It belongs to the villin/gelsolin family. In terms of tissue distribution, expressed in roots, young leaves, and inflorescences, mostly in the vasculature of roots, leaves, and filaments of the anthers and in epidermal cells of the elongation zone and root hairs. Also detected in guard cells.

It localises to the cytoplasm. Its subcellular location is the cytoskeleton. Functionally, ca(2+)-regulated actin-binding protein. Binds actin microfilaments (MFs). Involved in actin filament bundling, severing and capping. Caps the barbed end of actin filaments and is able to sever them in a calcium-dependent manner. MF severing is promoted by VLN1. The chain is Villin-3 from Oryza sativa subsp. japonica (Rice).